Reading from the N-terminus, the 276-residue chain is Insulin-like growth factor-binding protein 2-A (276 aa).

Residues 1–22 (MLSYVSCGLLLALVTFHGTARS) form the signal peptide. An IGFBP N-terminal domain is found at 24 to 105 (MVFRCPSCTA…VQGLGRCGRK (82 aa)). Cystine bridges form between Cys28/Cys55, Cys31/Cys57, Cys39/Cys58, Cys46/Cys61, Cys69/Cys82, Cys76/Cys102, Cys180/Cys214, Cys225/Cys236, and Cys238/Cys259. The 83-residue stretch at 177-259 (QSQCQQELDQ…SPLIRGDPNC (83 aa)) folds into the Thyroglobulin type-1 domain. The Cell attachment site motif lies at 254-256 (RGD).

As to quaternary structure, interacts equally well with igf1 and igf2. In embryos at 24 hpf, initially expressed in the lens and cranial region, and at 48 and 72 hpf in the brain boundary vasculature. Expression in these regions persists throughout the hatching period and by 96 hpf expression is most abundant in the liver. In both male and female adults, highest expression is in the liver with modest expression in the brain. In male but not females adults, expressed at a low level in muscle and gonad. Also expressed in the adult intestine.

It is found in the secreted. IGF-binding proteins prolong the half-life of the IGFs and have been shown to either inhibit or stimulate the growth promoting effects of the IGFs on cell culture. They alter the interaction of IGFs with their cell surface receptors. The protein is Insulin-like growth factor-binding protein 2-A (igfbp2a) of Danio rerio (Zebrafish).